A 231-amino-acid polypeptide reads, in one-letter code: Endo-1,4-beta-xylanase A (231 aa).

Residues 1 to 19 form the signal peptide; the sequence is MVSFKSLLVAVSALTGALA. N-linked (GlcNAc...) asparagine glycosylation occurs at Asn32. A GH11 domain is found at 41–229; that stretch reads QVTGNSEGYH…SSGSSSIYVQ (189 aa). Residue Glu125 is the Nucleophile of the active site. The active-site Proton donor is Glu216.

Belongs to the glycosyl hydrolase 11 (cellulase G) family.

It localises to the secreted. It carries out the reaction Endohydrolysis of (1-&gt;4)-beta-D-xylosidic linkages in xylans.. Its pathway is glycan degradation; xylan degradation. Its activity is regulated as follows. Inhibited by the proteinaceous endoxylanase inhibitor I from T.aestivum (TAXI-I). Functionally, endo-1,4-beta-xylanase involved in the hydrolysis of xylan, a major structural heterogeneous polysaccharide found in plant biomass representing the second most abundant polysaccharide in the biosphere, after cellulose. Plays an important role in causing fusarium head blight (FHB) on cereal crops. This Gibberella zeae (strain ATCC MYA-4620 / CBS 123657 / FGSC 9075 / NRRL 31084 / PH-1) (Wheat head blight fungus) protein is Endo-1,4-beta-xylanase A (XYLA).